Consider the following 291-residue polypeptide: 33 kDa chaperonin (291 aa).

2 disulfide bridges follow: cysteine 229–cysteine 231 and cysteine 262–cysteine 265.

This sequence belongs to the HSP33 family. In terms of processing, under oxidizing conditions two disulfide bonds are formed involving the reactive cysteines. Under reducing conditions zinc is bound to the reactive cysteines and the protein is inactive.

The protein localises to the cytoplasm. Redox regulated molecular chaperone. Protects both thermally unfolding and oxidatively damaged proteins from irreversible aggregation. Plays an important role in the bacterial defense system toward oxidative stress. In Aliivibrio fischeri (strain ATCC 700601 / ES114) (Vibrio fischeri), this protein is 33 kDa chaperonin.